Reading from the N-terminus, the 223-residue chain is Trichome differentiation protein GL1 (223 aa).

HTH myb-type domains follow at residues 11-63 (NQEY…MNYL) and 64-118 (SPNV…SKKL). 2 consecutive DNA-binding regions (H-T-H motif) follow at residues 39–63 (WNRI…MNYL) and 91–114 (WSLI…NTHL).

The protein resides in the nucleus. Functionally, regulates the production of a signal that induces hair (trichome) precursor cells on leaf primordia to differentiate. This is Trichome differentiation protein GL1 (GL1) from Arabidopsis lyrata (Lyre-leaved rock-cress).